We begin with the raw amino-acid sequence, 196 residues long: Oplophorus-luciferin 2-monooxygenase catalytic subunit (196 aa).

The signal sequence occupies residues 1–27; the sequence is MAYSTLFIIALTAVVTQASSTQKSNLT.

As to quaternary structure, heterotetramer of a catalytic 19 kDa and a non-catalytic 35 kDa subunit.

The protein resides in the secreted. It catalyses the reaction coelenterazine + O2 = coelenteramide + hnu + CO2. Inhibited by micromolar Cu(2+). Its function is as follows. Catalytic subunit of oplophorus-luciferin 2-monooxygenase. Oxidoreductase that converts coelenterazine (the oplophorus luciferin) to coelenteramide under emission of blue light with a maximum at 454 nm. Is also active with bisdeoxycoelenterazine. The sequence is that of Oplophorus-luciferin 2-monooxygenase catalytic subunit from Oplophorus gracilirostris (Luminous shrimp).